The primary structure comprises 225 residues: tRNA (guanine-N(7)-)-methyltransferase (225 aa).

4 residues coordinate S-adenosyl-L-methionine: Glu-56, Glu-81, Asp-108, and Asp-131. The active site involves Asp-131. Substrate is bound by residues Lys-135, Asp-167, and 204–207 (TKFE).

Belongs to the class I-like SAM-binding methyltransferase superfamily. TrmB family.

The enzyme catalyses guanosine(46) in tRNA + S-adenosyl-L-methionine = N(7)-methylguanosine(46) in tRNA + S-adenosyl-L-homocysteine. It participates in tRNA modification; N(7)-methylguanine-tRNA biosynthesis. In terms of biological role, catalyzes the formation of N(7)-methylguanine at position 46 (m7G46) in tRNA. The polypeptide is tRNA (guanine-N(7)-)-methyltransferase (Legionella pneumophila (strain Lens)).